The primary structure comprises 504 residues: Zinc finger CCCH-type with G patch domain-containing protein (504 aa).

Positions 95-121 (LSEDSNEVKPNPDTDEENEEEEQDISG) are disordered. The segment covering 107–118 (DTDEENEEEEQD) has biased composition (acidic residues). Residues 165–191 (KSMKPCGFYLEGKCRFMDNCRYSHGEV) form a C3H1-type zinc finger. The region spanning 308–354 (TRGIGSKLLMKMGYELGKGLGKTLSGRVEPVQAVVLPKGHSLDICAE) is the G-patch domain.

It is found in the nucleus. Its function is as follows. Transcription repressor that specifically binds the 5'-GGAG[GA]A[GA]A-3' consensus sequence. Represses transcription by recruiting the chromatin multiprotein complex NuRD to target promoters. Negatively regulates expression of EGFR, a gene involved in cell proliferation, survival and migration. In Danio rerio (Zebrafish), this protein is Zinc finger CCCH-type with G patch domain-containing protein (zgpat).